A 408-amino-acid chain; its full sequence is Peptidase T (408 aa).

Residue His78 participates in Zn(2+) binding. The active site involves Asp80. Asp140 provides a ligand contact to Zn(2+). The active-site Proton acceptor is the Glu173. Residues Glu174, Asp196, and His379 each coordinate Zn(2+).

It belongs to the peptidase M20B family. Zn(2+) serves as cofactor.

It localises to the cytoplasm. It catalyses the reaction Release of the N-terminal residue from a tripeptide.. Its function is as follows. Cleaves the N-terminal amino acid of tripeptides. This is Peptidase T from Escherichia coli (strain UTI89 / UPEC).